Consider the following 167-residue polypeptide: Ribosome maturation factor RimM (167 aa).

Residues 94 to 165 enclose the PRC barrel domain; it reads ENEFYYSDII…KIIITPMEGL (72 aa).

The protein belongs to the RimM family. In terms of assembly, binds ribosomal protein uS19.

It is found in the cytoplasm. In terms of biological role, an accessory protein needed during the final step in the assembly of 30S ribosomal subunit, possibly for assembly of the head region. Essential for efficient processing of 16S rRNA. May be needed both before and after RbfA during the maturation of 16S rRNA. It has affinity for free ribosomal 30S subunits but not for 70S ribosomes. The sequence is that of Ribosome maturation factor RimM from Staphylococcus aureus (strain NCTC 8325 / PS 47).